Reading from the N-terminus, the 174-residue chain is ATP-dependent protease subunit HslV (174 aa).

Residue Thr-2 is part of the active site. Positions 156, 159, and 162 each coordinate Na(+).

It belongs to the peptidase T1B family. HslV subfamily. As to quaternary structure, a double ring-shaped homohexamer of HslV is capped on each side by a ring-shaped HslU homohexamer. The assembly of the HslU/HslV complex is dependent on binding of ATP.

Its subcellular location is the cytoplasm. The enzyme catalyses ATP-dependent cleavage of peptide bonds with broad specificity.. Allosterically activated by HslU binding. Its function is as follows. Protease subunit of a proteasome-like degradation complex believed to be a general protein degrading machinery. This is ATP-dependent protease subunit HslV from Agrobacterium fabrum (strain C58 / ATCC 33970) (Agrobacterium tumefaciens (strain C58)).